Here is a 107-residue protein sequence, read N- to C-terminus: Ferredoxin-1 (107 aa).

4Fe-4S ferredoxin-type domains follow at residues 2–30 and 31–60; these read AFVV…YEGP and NFLV…SEDE. 2 residues coordinate [3Fe-4S] cluster: Cys9 and Cys17. Residues Cys21, Cys40, Cys43, and Cys46 each coordinate [4Fe-4S] cluster. Cys50 contributes to the [3Fe-4S] cluster binding site. A disordered region spans residues 84–107; that stretch reads EKKDPLPDAEDWDGVKGKLQHLER. Over residues 96-107 the composition is skewed to basic and acidic residues; the sequence is DGVKGKLQHLER.

The cofactor is [4Fe-4S] cluster. [3Fe-4S] cluster is required as a cofactor.

Ferredoxins are iron-sulfur proteins that transfer electrons in a wide variety of metabolic reactions. This ferredoxin could play a role in regulating gene expression by interacting directly with DNA. This chain is Ferredoxin-1 (fdxA), found in Azotobacter vinelandii.